A 416-amino-acid chain; its full sequence is Glutamyl-tRNA reductase (416 aa).

Residues T49 to R52, S105, E110 to Q112, and Q116 each bind substrate. C50 serves as the catalytic Nucleophile. G185–I190 is an NADP(+) binding site.

The protein belongs to the glutamyl-tRNA reductase family. Homodimer.

The enzyme catalyses (S)-4-amino-5-oxopentanoate + tRNA(Glu) + NADP(+) = L-glutamyl-tRNA(Glu) + NADPH + H(+). It functions in the pathway porphyrin-containing compound metabolism; protoporphyrin-IX biosynthesis; 5-aminolevulinate from L-glutamyl-tRNA(Glu): step 1/2. In terms of biological role, catalyzes the NADPH-dependent reduction of glutamyl-tRNA(Glu) to glutamate 1-semialdehyde (GSA). This Nitrosomonas europaea (strain ATCC 19718 / CIP 103999 / KCTC 2705 / NBRC 14298) protein is Glutamyl-tRNA reductase.